The sequence spans 428 residues: Serine--tRNA ligase (428 aa).

231-233 (TAE) is an L-serine binding site. Residue 262 to 264 (RSE) participates in ATP binding. L-serine is bound at residue Glu285. 349–352 (EISS) contacts ATP. Residue Ser385 participates in L-serine binding.

This sequence belongs to the class-II aminoacyl-tRNA synthetase family. Type-1 seryl-tRNA synthetase subfamily. Homodimer. The tRNA molecule binds across the dimer.

Its subcellular location is the cytoplasm. The catalysed reaction is tRNA(Ser) + L-serine + ATP = L-seryl-tRNA(Ser) + AMP + diphosphate + H(+). It carries out the reaction tRNA(Sec) + L-serine + ATP = L-seryl-tRNA(Sec) + AMP + diphosphate + H(+). The protein operates within aminoacyl-tRNA biosynthesis; selenocysteinyl-tRNA(Sec) biosynthesis; L-seryl-tRNA(Sec) from L-serine and tRNA(Sec): step 1/1. Its function is as follows. Catalyzes the attachment of serine to tRNA(Ser). Is also able to aminoacylate tRNA(Sec) with serine, to form the misacylated tRNA L-seryl-tRNA(Sec), which will be further converted into selenocysteinyl-tRNA(Sec). In Staphylococcus epidermidis (strain ATCC 35984 / DSM 28319 / BCRC 17069 / CCUG 31568 / BM 3577 / RP62A), this protein is Serine--tRNA ligase.